Consider the following 203-residue polypeptide: MFNVSNNVAPSRYQGPSSTSVTPNAFHDVPSLGQKVGAGSQKDVFHSRQDPRQCICLFRPGTTGSIPAEQYAQKELETTKQLKNLGFPVVDAHALVKHQGSVGVAKDFIHNALDSEDIVNNKKSLPDNLKFNKNVLEDCNAIIRRLKNLEVHIEDLQFLVDHNGHVLINDPRDVVRSSPDKSISKVNELRSHALNNLLDIDSD.

The tract at residues 1-23 (MFNVSNNVAPSRYQGPSSTSVTP) is disordered. Serine 40, glutamine 41, lysine 42, aspartate 107, isoleucine 109, and aspartate 114 together coordinate ATP. Residue aspartate 155 is part of the active site. Glutamine 157 serves as a coordination point for ATP.

It belongs to the HopBF1 family.

The protein localises to the secreted. It localises to the host cell. The catalysed reaction is L-seryl-[protein] + ATP = O-phospho-L-seryl-[protein] + ADP + H(+). Functionally, effector protein that targets and inactivates the eukaryotic molecular chaperone HSP90 during infection. HopBF1 is recognized by HSP90 as a host client. As a result, HopBF1 phosphorylates HSP90, leading to the inactivation of the HSP90 ATPase activity and chaperone function. In vitro, can phosphorylate the recombinant yeast HSP82 (HSP90) and human HSP 90-beta on Ser-108. This chain is Type III effector protein HopBF1, found in Ewingella americana (strain ATCC 33852 / DSM 4580 / CCUG 14506 / JCM 5911 / LMG 7869 / NCTC 12157 / CDC 1468-78).